We begin with the raw amino-acid sequence, 257 residues long: 3-methyl-2-oxobutanoate hydroxymethyltransferase (257 aa).

Mg(2+)-binding residues include D42 and D86. 3-methyl-2-oxobutanoate is bound by residues 42–43 (DS), D86, and K116. E118 serves as a coordination point for Mg(2+). Residue E185 is the Proton acceptor of the active site.

This sequence belongs to the PanB family. Homodecamer; pentamer of dimers. Mg(2+) serves as cofactor.

It localises to the cytoplasm. It catalyses the reaction 3-methyl-2-oxobutanoate + (6R)-5,10-methylene-5,6,7,8-tetrahydrofolate + H2O = 2-dehydropantoate + (6S)-5,6,7,8-tetrahydrofolate. Its pathway is cofactor biosynthesis; (R)-pantothenate biosynthesis; (R)-pantoate from 3-methyl-2-oxobutanoate: step 1/2. Its function is as follows. Catalyzes the reversible reaction in which hydroxymethyl group from 5,10-methylenetetrahydrofolate is transferred onto alpha-ketoisovalerate to form ketopantoate. The polypeptide is 3-methyl-2-oxobutanoate hydroxymethyltransferase (Prochlorococcus marinus (strain AS9601)).